Consider the following 347-residue polypeptide: NADH-ubiquinone oxidoreductase chain 2 (347 aa).

Helical transmembrane passes span 1 to 21 (MTPMTTLIMLFSLLLGTTLTL), 26 to 46 (WLLMWMGLEVSTLAIIPLLTY), 56 to 76 (AIKYFLTQATASMLLMFAASL), 96 to 116 (GIMTFALAMKLGLAPFHYWVP), 153 to 171 (ILLTLAISSTLLGGWNGLN), 178 to 198 (VMAYSSIAHMGWMVLIIIYFP), 199 to 219 (TLTTLNLTLYIMSTVALFTVF), 237 to 257 (APIMTLAIILLLLSLGGLPPL), 277 to 297 (IMATVLAITALLNLFFYMRII), and 326 to 346 (LPTLVILSTTLLPLTPMFITL).

This sequence belongs to the complex I subunit 2 family. In terms of assembly, core subunit of respiratory chain NADH dehydrogenase (Complex I) which is composed of 45 different subunits. Interacts with TMEM242.

The protein resides in the mitochondrion inner membrane. The catalysed reaction is a ubiquinone + NADH + 5 H(+)(in) = a ubiquinol + NAD(+) + 4 H(+)(out). Its function is as follows. Core subunit of the mitochondrial membrane respiratory chain NADH dehydrogenase (Complex I) which catalyzes electron transfer from NADH through the respiratory chain, using ubiquinone as an electron acceptor. Essential for the catalytic activity and assembly of complex I. The chain is NADH-ubiquinone oxidoreductase chain 2 from Ornithorhynchus anatinus (Duckbill platypus).